A 2648-amino-acid chain; its full sequence is E3 ubiquitin-protein ligase hecd-1 (2648 aa).

ANK repeat units lie at residues 374-403 and 405-434; these read VGQS…DVNK and HKSS…NPDL. Positions 433–455 are enriched in basic and acidic residues; sequence DLRDEDGKTALDKARERSDDDHN. Disordered stretches follow at residues 433-494, 645-714, and 1376-1400; these read DLRD…ELPN, PMEI…KATA, and DPPK…ALPP. 3 stretches are compositionally biased toward polar residues: residues 478 to 489, 652 to 661, and 670 to 688; these read ASTSKQPGTSTK, NQPSSSTAVP, and TVPS…NPST. 2 stretches are compositionally biased toward low complexity: residues 696–714 and 1383–1400; these read SSTP…KATA and PAGT…ALPP. The region spanning 1438–1510 is the MIB/HERC2 domain; that stretch reads RSRGSYKISE…NFDIERVTST (73 aa). Disordered regions lie at residues 1538–1562, 1575–1629, 1652–1796, and 1811–1836; these read YTPK…GSSR, KNTT…SLQH, NQEP…LLGG, and ESLS…GKKP. Low complexity-rich tracts occupy residues 1543 to 1562 and 1575 to 1586; these read TGGP…GSSR and KNTTPAGTPSSG. Polar residues predominate over residues 1610–1629; that stretch reads TSGPSVASTGQAASAESLQH. Acidic residues predominate over residues 1653-1666; that stretch reads QEPEDEPMGGEESD. Positions 1667-1696 are enriched in low complexity; the sequence is SAASMRSAASSNSQMSMGSSSQQQQQQDSD. Acidic residues-rich tracts occupy residues 1736–1746 and 1756–1783; these read TDGDADADETN and DAME…DESS. Residues 1812-1823 are compositionally biased toward low complexity; it reads SLSDASSSAKDA. The HECT domain occupies 2240-2648; sequence FHADRKAVLE…AINEKGFHLN (409 aa). Residue Cys2617 is the Glycyl thioester intermediate of the active site.

This sequence belongs to the UPL family. K-HECT subfamily. Expressed in most tissues, including hypodermis, muscle, intestine, vulva, and neurons.

It carries out the reaction S-ubiquitinyl-[E2 ubiquitin-conjugating enzyme]-L-cysteine + [acceptor protein]-L-lysine = [E2 ubiquitin-conjugating enzyme]-L-cysteine + N(6)-ubiquitinyl-[acceptor protein]-L-lysine.. It functions in the pathway protein modification; protein ubiquitination. Its function is as follows. E3 ubiquitin-protein ligase which accepts ubiquitin from an E2 ubiquitin-conjugating enzyme in the form of a thioester and then directly transfers the ubiquitin to targeted substrates. Involved in the ubiquitination and proteasomal-mediated degradation of cytoplasmic and mitochondrial proteins. Positively regulates lin-12 activity in the anchor cell (AC)/vulval precursor (VU) cell fate decision. Negatively regulates glp-1 activity in germline proliferation. May play a role in the formation of fibrous organelles, a hemidesmosome-like structure attaching muscles to the epidermis. Regulates germline DNA double-strand-break repair and apoptosis in response to DNA damage by recruiting E4 ubiquitin-protein ligase ufd-2 to DNA repair foci. The sequence is that of E3 ubiquitin-protein ligase hecd-1 from Caenorhabditis elegans.